A 250-amino-acid polypeptide reads, in one-letter code: Capsid protein (250 aa).

The disordered stretch occupies residues 1–31 (MPKRDAPWLMAGTSKVSRSGNYSPSGGMGSK). The short motif at 3–19 (KRDAPWLMAGTSKVSRS) is the Bipartite nuclear localization signal element. Polar residues predominate over residues 14-31 (SKVSRSGNYSPSGGMGSK). Positions 34 to 48 (KANAWVNRPMYRKPR) match the Nuclear localization signal motif. A zinc finger spans residues 53–70 (YKSPDVPKGCEGPCKVQS). The Nuclear export signal signature appears at 95–116 (ITHRVGKRFCVKSVYILGKIWM). A Bipartite nuclear localization signal motif is present at residues 194 to 241 (RRFWKVNNHVVYNHQEAGKYENHTENALLLYMACTHASNPVYATLKIR).

This sequence belongs to the geminiviridae capsid protein family. In terms of assembly, homomultimer. Binds to single-stranded and double-stranded viral DNA. Interacts (via nuclear localization signals) with host importin alpha-1a.

It is found in the virion. The protein resides in the host nucleus. Functionally, encapsidates the viral DNA into characteristic twinned ('geminate') particles. Binds the genomic viral ssDNA and shuttles it into and out of the cell nucleus. The CP of bipartite geminiviruses is not required for cell-to-cell or systemic movement. The chain is Capsid protein from Bean golden yellow mosaic virus (isolate Puerto Rico) (BGYMV).